A 188-amino-acid polypeptide reads, in one-letter code: MKIAQECRAGNVVMIDGSPWVVQKAEYNKSGRNAAVVKMKLKNLLSGINTETVYKADDKFEDILLDRKEVTYSYYADPMYVFMDGEYNQYEVTKEDLGDLLPWIEDGMEDVCDAVFYEGKVISVTAPTSIVREIAYTEPAVRGDTSGKVMKVAKLKNGTELSVAAFVEIGEKIIIDTRTGEYKSRAKD.

It belongs to the elongation factor P family.

The protein localises to the cytoplasm. It functions in the pathway protein biosynthesis; polypeptide chain elongation. Involved in peptide bond synthesis. Stimulates efficient translation and peptide-bond synthesis on native or reconstituted 70S ribosomes in vitro. Probably functions indirectly by altering the affinity of the ribosome for aminoacyl-tRNA, thus increasing their reactivity as acceptors for peptidyl transferase. The protein is Elongation factor P of Cellvibrio japonicus (strain Ueda107) (Pseudomonas fluorescens subsp. cellulosa).